The sequence spans 287 residues: ATP synthase gamma chain (287 aa).

Belongs to the ATPase gamma chain family. F-type ATPases have 2 components, CF(1) - the catalytic core - and CF(0) - the membrane proton channel. CF(1) has five subunits: alpha(3), beta(3), gamma(1), delta(1), epsilon(1). CF(0) has three main subunits: a, b and c.

Its subcellular location is the cell inner membrane. In terms of biological role, produces ATP from ADP in the presence of a proton gradient across the membrane. The gamma chain is believed to be important in regulating ATPase activity and the flow of protons through the CF(0) complex. This chain is ATP synthase gamma chain, found in Geotalea uraniireducens (strain Rf4) (Geobacter uraniireducens).